We begin with the raw amino-acid sequence, 329 residues long: MNKRKPVVALVGPTSVGKTATAIELALTFGGEVVSADSRYLYRGMDIGTDKPTLEERRGVPHHLIDILDPRDDYSLALFQRDAQRAIEEIHARGRLPIVAGGTPLYLRALLEGWRIPPAPPNPELRAQLELRARREGPEALHRELQTVDPVAAARIPPENVRRVIRALEIFLTTGRRMTELEGREAPPWRVLWLGLTMPRDELYRRIDERVDRQVARGLVEEVQRLLEQGVPPDAPAMTALGYRQIVAFLTGQLSLEEAIQRIKYDTHRYARHQLTWLRRMKQVEWYDVTQPGWYEQLRERVERSLREESDEGDVAVHQSGGGKEAPRA.

12-19 contributes to the ATP binding site; that stretch reads GPTSVGKT. 14–19 is a binding site for substrate; the sequence is TSVGKT. Positions 37–40 are interaction with substrate tRNA; that stretch reads DSRY. Residues 306–329 form a disordered region; it reads LREESDEGDVAVHQSGGGKEAPRA. The segment covering 320 to 329 has biased composition (gly residues); the sequence is SGGGKEAPRA.

It belongs to the IPP transferase family. As to quaternary structure, monomer. Mg(2+) is required as a cofactor.

It catalyses the reaction adenosine(37) in tRNA + dimethylallyl diphosphate = N(6)-dimethylallyladenosine(37) in tRNA + diphosphate. Its function is as follows. Catalyzes the transfer of a dimethylallyl group onto the adenine at position 37 in tRNAs that read codons beginning with uridine, leading to the formation of N6-(dimethylallyl)adenosine (i(6)A). This chain is tRNA dimethylallyltransferase, found in Thermomicrobium roseum (strain ATCC 27502 / DSM 5159 / P-2).